Reading from the N-terminus, the 1306-residue chain is Contactin-associated protein-like 5 (1306 aa).

Residues 1 to 24 (MDSLPRLTSVLTLLFSGLWHLGLT) form the signal peptide. Residues 25–1237 (ATNYNCDDPL…PLTNAVRSDS (1213 aa)) lie on the Extracellular side of the membrane. Residues 30–174 (CDDPLASLLS…IGMRVEVYGC (145 aa)) form the F5/8 type C domain. A disulfide bridge connects residues Cys30 and Cys174. 2 consecutive Laminin G-like domains span residues 180 to 360 (VADF…TFSC) and 367 to 544 (PITF…IDLC). N-linked (GlcNAc...) asparagine glycans are attached at residues Asn282, Asn355, and Asn496. Cysteines 329 and 360 form a disulfide. Intrachain disulfides connect Cys512–Cys544, Cys550–Cys561, and Cys555–Cys570. Positions 546-583 (IKDRCLPNYCEHGGSCSQSWTTFYCNCSDTSYTGATCH) constitute an EGF-like 1 domain. An N-linked (GlcNAc...) asparagine glycan is attached at Asn571. A disulfide bridge links Cys572 with Cys582. Residues 584-790 (NSIYEQSCEV…LRCYGDRRFW (207 aa)) enclose the Fibrinogen C-terminal domain. The N-linked (GlcNAc...) asparagine glycan is linked to Asn622. One can recognise a Laminin G-like 3 domain in the interval 791–956 (NAVSFYTEAS…KVTSGVRPGC (166 aa)). 5 disulfides stabilise this stretch: Cys929/Cys956, Cys960/Cys973, Cys967/Cys982, Cys984/Cys994, and Cys1164/Cys1199. The EGF-like 2 domain occupies 957-995 (PGHCSSYGSICHNGGKCVEKHNGYLCDCTNSPYEGPFCK). Residues 1013–1199 (QEPYPVTKNI…VHGTLTESSC (187 aa)) form the Laminin G-like 4 domain. The helical transmembrane segment at 1238–1258 (AVIGGVIAVVIFIIFCIIGIM) threads the bilayer. Over 1259–1306 (TRFLYQHKQSHRTSQMKEKEYPENLDSSFRNEIDLQNTVSECKREYFI) the chain is Cytoplasmic.

This sequence belongs to the neurexin family.

It is found in the membrane. May play a role in the correct development and proper functioning of the peripheral and central nervous system and be involved in cell adhesion and intercellular communication. This Homo sapiens (Human) protein is Contactin-associated protein-like 5 (CNTNAP5).